Consider the following 206-residue polypeptide: MKTNVISLDNQTVGEIELADEIFGVPVRGDILFRAVNWQLAKRQSGNHKTKTISEISGTTKKPFAQKGGGRARQGSLRSAQFRGGSTIFGPVVRSHAHDLPKKVRKLALKTALSAKVADGKLIVVDAASAGSPKTKDLAARLGKLGLSSVLFIDGAAVDGNFALASRNIPYVDVLPTQGANVYDILRRDTLVLTKDAVAALEARLK.

A disordered region spans residues 49-73; that stretch reads KTKTISEISGTTKKPFAQKGGGRAR.

Belongs to the universal ribosomal protein uL4 family. Part of the 50S ribosomal subunit.

Its function is as follows. One of the primary rRNA binding proteins, this protein initially binds near the 5'-end of the 23S rRNA. It is important during the early stages of 50S assembly. It makes multiple contacts with different domains of the 23S rRNA in the assembled 50S subunit and ribosome. In terms of biological role, forms part of the polypeptide exit tunnel. The chain is Large ribosomal subunit protein uL4 from Paramagnetospirillum magneticum (strain ATCC 700264 / AMB-1) (Magnetospirillum magneticum).